The primary structure comprises 480 residues: Phosphomethylpyrimidine synthase (480 aa).

Substrate-binding positions include Asn-66, Met-95, Tyr-124, His-159, 179-181, 220-223, and Glu-259; these read SRG and DGLR. His-263 is a Zn(2+) binding site. Substrate is bound at residue Tyr-286. Residue His-327 participates in Zn(2+) binding. Positions 407, 410, and 415 each coordinate [4Fe-4S] cluster. A disordered region spans residues 426–480; sequence DGDMESIEADADDRTPLEDSSAAAVNRPPVGTHDGADIPGPDADMPADTEGSADD. The span at 470 to 480 shows a compositional bias: acidic residues; sequence MPADTEGSADD.

The protein belongs to the ThiC family. Requires [4Fe-4S] cluster as cofactor.

It carries out the reaction 5-amino-1-(5-phospho-beta-D-ribosyl)imidazole + S-adenosyl-L-methionine = 4-amino-2-methyl-5-(phosphooxymethyl)pyrimidine + CO + 5'-deoxyadenosine + formate + L-methionine + 3 H(+). The protein operates within cofactor biosynthesis; thiamine diphosphate biosynthesis. Functionally, catalyzes the synthesis of the hydroxymethylpyrimidine phosphate (HMP-P) moiety of thiamine from aminoimidazole ribotide (AIR) in a radical S-adenosyl-L-methionine (SAM)-dependent reaction. This chain is Phosphomethylpyrimidine synthase, found in Haloarcula marismortui (strain ATCC 43049 / DSM 3752 / JCM 8966 / VKM B-1809) (Halobacterium marismortui).